The sequence spans 584 residues: Membrane frizzled-related protein (584 aa).

Topologically, residues 1-69 are cytoplasmic; it reads MKDYDDVILR…QPDCHFSWFC (69 aa). A helical; Signal-anchor for type II membrane protein transmembrane segment spans residues 70 to 90; the sequence is ILLLSGLLLLLLGLLVAVILA. Topologically, residues 91-584 are extracellular; the sequence is QLQATSLPRT…AASLEACSQP (494 aa). A disordered region spans residues 108–140; the sequence is RGLTPMGVIPSTTPNTTTTTTTTTPARTGQQEA. The span at 119 to 132 shows a compositional bias: low complexity; sequence TTPNTTTTTTTTTP. 2 disulfides stabilise this stretch: Cys-150–Cys-176 and Cys-203–Cys-222. Residues 150–259 enclose the CUB 1 domain; the sequence is CGGLLPGPSG…SGFQAWYQAV (110 aa). N-linked (GlcNAc...) asparagine glycosylation is present at Asn-233. In terms of domain architecture, LDL-receptor class A 1 spans 265–301; the sequence is SCAHNEFHCDLLLCLKRDSVCDGITECADGSDEANCS. 5 disulfide bridges follow: Cys-266–Cys-278, Cys-273–Cys-291, Cys-285–Cys-300, Cys-307–Cys-333, and Cys-360–Cys-383. The CUB 2 domain maps to 307–420; sequence CGGNLTGLYG…GGFLATYQAI (114 aa). An N-linked (GlcNAc...) asparagine glycan is attached at Asn-421. Residues 426 to 460 form the LDL-receptor class A 2 domain; sequence GCPWAEFCQSGGYRDLQWMCDLWKDCANDSNDNCS. 7 disulfide bridges follow: Cys-433–Cys-451, Cys-445–Cys-459, Cys-471–Cys-533, Cys-479–Cys-526, Cys-517–Cys-554, Cys-543–Cys-581, and Cys-547–Cys-569. Residue Asn-458 is glycosylated (N-linked (GlcNAc...) asparagine). Residues 466-584 form the FZ domain; the sequence is QPDLTCEPVQ…AASLEACSQP (119 aa).

In terms of assembly, interacts with C1QTNF5. As to expression, expressed in retinal pigment epithelium and ciliary epithelium of the eye.

The protein localises to the apical cell membrane. Its function is as follows. May play a role in eye development. The chain is Membrane frizzled-related protein (Mfrp) from Mus musculus (Mouse).